The chain runs to 210 residues: Probable GTP-binding protein EngB (210 aa).

Residues 29 to 203 (NGIEIAFAGR…SNKLDSWFAP (175 aa)) form the EngB-type G domain. Residues 37-44 (GRSNAGKS), 64-68 (GRTQL), 82-85 (DLPG), 149-152 (TKAD), and 181-184 (IYSA) contribute to the GTP site. Positions 44 and 66 each coordinate Mg(2+).

It belongs to the TRAFAC class TrmE-Era-EngA-EngB-Septin-like GTPase superfamily. EngB GTPase family. The cofactor is Mg(2+).

In terms of biological role, necessary for normal cell division and for the maintenance of normal septation. The polypeptide is Probable GTP-binding protein EngB (Haemophilus ducreyi (strain 35000HP / ATCC 700724)).